Consider the following 338-residue polypeptide: Probable O-antigen biosynthesis glycosyltransferase WbiN (338 aa).

The protein belongs to the glycosyltransferase group 1 family. Glycosyltransferase 4 subfamily.

The catalysed reaction is N-acetyl-alpha-D-galactosaminyl-di-trans,octa-cis-undecaprenyl diphosphate + UDP-N-acetyl-alpha-D-galactosamine = alpha-D-GalNAc-(1-&gt;3)-alpha-D-GalNAc-di-trans,octa-cis-undecaprenyl diphosphate + UDP + H(+). It participates in bacterial outer membrane biogenesis; LPS O-antigen biosynthesis. Functionally, involved in the assembly of the O-repeating unit during O-antigen biosynthesis. This chain is Probable O-antigen biosynthesis glycosyltransferase WbiN, found in Escherichia coli.